Here is a 189-residue protein sequence, read N- to C-terminus: Molybdopterin synthase catalytic subunit (189 aa).

Ser-20 carries the phosphoserine modification. Substrate contacts are provided by residues 143–144 (HR), Lys-159, and 166–168 (KKE).

This sequence belongs to the MoaE family. MOCS2B subfamily. As to quaternary structure, heterotetramer; composed of 2 small (MOCS2A) and 2 large (MOCS2B) subunits.

The protein localises to the cytoplasm. It is found in the cytosol. It carries out the reaction 2 [molybdopterin-synthase sulfur-carrier protein]-C-terminal-Gly-aminoethanethioate + cyclic pyranopterin phosphate + H2O = molybdopterin + 2 [molybdopterin-synthase sulfur-carrier protein]-C-terminal Gly-Gly + 2 H(+). Its pathway is cofactor biosynthesis; molybdopterin biosynthesis. Functionally, catalytic subunit of the molybdopterin synthase complex, a complex that catalyzes the conversion of precursor Z into molybdopterin. Acts by mediating the incorporation of 2 sulfur atoms from thiocarboxylated MOCS2A into precursor Z to generate a dithiolene group. The sequence is that of Molybdopterin synthase catalytic subunit from Bos taurus (Bovine).